Consider the following 87-residue polypeptide: Small ribosomal subunit protein bS20 (87 aa).

Positions 1 to 29 (MANTAQARKRARQAVKQNAHNSSQRSTLR) are disordered. Residues 20–29 (HNSSQRSTLR) show a composition bias toward polar residues.

It belongs to the bacterial ribosomal protein bS20 family.

Functionally, binds directly to 16S ribosomal RNA. This is Small ribosomal subunit protein bS20 from Herminiimonas arsenicoxydans.